A 111-amino-acid chain; its full sequence is Universal stress protein B (111 aa).

2 consecutive transmembrane segments (helical) span residues 1 to 21 (MISTVALFWALCVVCIVNMAR) and 90 to 110 (FILTSALCGLVVVSLIALMIW).

Belongs to the universal stress protein B family.

The protein localises to the cell inner membrane. This chain is Universal stress protein B, found in Escherichia coli O45:K1 (strain S88 / ExPEC).